The primary structure comprises 409 residues: Probable ATP-dependent RNA helicase MG308 homolog (409 aa).

One can recognise a Helicase ATP-binding domain in the interval 26–179; the sequence is VFKVWPRQNV…RKQVAPLTVV (154 aa). 39 to 46 is a binding site for ATP; that stretch reads AETGSGKT. Residues 126-129 carry the DEVD box motif; that stretch reads DEVD. Residues 190–349 form the Helicase C-terminal domain; it reads LVKHFLLNLN…SVHLERDGTL (160 aa).

This sequence belongs to the DEAD box helicase family.

The catalysed reaction is ATP + H2O = ADP + phosphate + H(+). This chain is Probable ATP-dependent RNA helicase MG308 homolog, found in Mycoplasma pneumoniae (strain ATCC 29342 / M129 / Subtype 1) (Mycoplasmoides pneumoniae).